We begin with the raw amino-acid sequence, 103 residues long: Large ribosomal subunit protein bL21 (103 aa).

This sequence belongs to the bacterial ribosomal protein bL21 family. As to quaternary structure, part of the 50S ribosomal subunit. Contacts protein L20.

In terms of biological role, this protein binds to 23S rRNA in the presence of protein L20. The polypeptide is Large ribosomal subunit protein bL21 (Mannheimia succiniciproducens (strain KCTC 0769BP / MBEL55E)).